Here is a 167-residue protein sequence, read N- to C-terminus: Large ribosomal subunit protein uL10 (167 aa).

Belongs to the universal ribosomal protein uL10 family. As to quaternary structure, part of the ribosomal stalk of the 50S ribosomal subunit. The N-terminus interacts with L11 and the large rRNA to form the base of the stalk. The C-terminus forms an elongated spine to which L12 dimers bind in a sequential fashion forming a multimeric L10(L12)X complex.

In terms of biological role, forms part of the ribosomal stalk, playing a central role in the interaction of the ribosome with GTP-bound translation factors. The protein is Large ribosomal subunit protein uL10 of Paraburkholderia phytofirmans (strain DSM 17436 / LMG 22146 / PsJN) (Burkholderia phytofirmans).